We begin with the raw amino-acid sequence, 293 residues long: ATP synthase gamma chain (293 aa).

It belongs to the ATPase gamma chain family. In terms of assembly, F-type ATPases have 2 components, CF(1) - the catalytic core - and CF(0) - the membrane proton channel. CF(1) has five subunits: alpha(3), beta(3), gamma(1), delta(1), epsilon(1). CF(0) has three main subunits: a, b and c.

The protein resides in the cell membrane. Produces ATP from ADP in the presence of a proton gradient across the membrane. The gamma chain is believed to be important in regulating ATPase activity and the flow of protons through the CF(0) complex. The sequence is that of ATP synthase gamma chain from Streptococcus agalactiae serotype Ia (strain ATCC 27591 / A909 / CDC SS700).